Here is a 321-residue protein sequence, read N- to C-terminus: MDKKISISQIKEVVQQAYEQVKGNTGGKNADYIPYLANIDKNLFGISVCLLNGQTITVGDFDYRFGIESVSKVHTAILILRQYGAQKVLEMIGADATGLPFNSIIAILLENDHPSTPLVNAGAISACSMVTPIGNSDKKWDAIVQNITDLCGSAPQLIEELYKSETATNFNNRSIAWLLKNYNRIYDDPNMSLDLYTRQCSLGVTAQMLSVAAGTVANGGVNPVTKKQVFDSELTPKITSMIATVGFYEHSGDWMYTSGIPAKTGVGGGVMGVLPGVFGVSAFAPPLDGSGNSVKAQLAIKYIMNKLGLNVFNGARVTIVD.

Substrate-binding residues include Ser69, Asn120, Glu165, Asn172, Tyr196, Tyr248, and Val266.

It belongs to the glutaminase family. Homotetramer.

It carries out the reaction L-glutamine + H2O = L-glutamate + NH4(+). The chain is Glutaminase from Bacteroides fragilis (strain YCH46).